Consider the following 205-residue polypeptide: Ribosomal RNA small subunit methyltransferase G (205 aa).

Residues Gly-66, Phe-71, 119-120 (IE), and Arg-135 each bind S-adenosyl-L-methionine.

Belongs to the methyltransferase superfamily. RNA methyltransferase RsmG family.

The protein localises to the cytoplasm. It carries out the reaction guanosine(527) in 16S rRNA + S-adenosyl-L-methionine = N(7)-methylguanosine(527) in 16S rRNA + S-adenosyl-L-homocysteine. Specifically methylates the N7 position of guanine in position 527 of 16S rRNA. This Rhizobium johnstonii (strain DSM 114642 / LMG 32736 / 3841) (Rhizobium leguminosarum bv. viciae) protein is Ribosomal RNA small subunit methyltransferase G.